A 155-amino-acid polypeptide reads, in one-letter code: Protein FAM162A (155 aa).

A required for proapoptotic activity region spans residues 77–103; the sequence is RFKKEEEIPETISFEMLDAAKNKLRVK. A helical transmembrane segment spans residues 104-121; that stretch reads VSYLMIALTVAGCIYMVI.

It belongs to the UPF0389 family. In terms of assembly, interacts with HSP90AB1; HSP90AB1 is essential for FAM162A mitochondrial localization and pro-apoptotic activity. Interacts with VDAC2; the interaction is probably involved in inducing mitochondrial permeability transition.

It is found in the mitochondrion membrane. Functionally, proposed to be involved in regulation of apoptosis; the exact mechanism may differ between cell types/tissues. May be involved in hypoxia-induced cell death of transformed cells implicating cytochrome C release and caspase activation (such as CASP9) and inducing mitochondrial permeability transition. May be involved in hypoxia-induced cell death of neuronal cells probably by promoting release of AIFM1 from mitochondria to cytoplasm and its translocation to the nucleus; however, the involvement of caspases has been reported conflictingly. This chain is Protein FAM162A (Fam162a), found in Mus musculus (Mouse).